The primary structure comprises 141 residues: Large ribosomal subunit protein uL22 (141 aa).

The segment at 110–141 is disordered; that stretch reads EEKKTVAKKTTTTKAPAKKTTSTKKATAKKES. A compositionally biased stretch (low complexity) spans 117–134; that stretch reads KKTTTTKAPAKKTTSTKK.

This sequence belongs to the universal ribosomal protein uL22 family. As to quaternary structure, part of the 50S ribosomal subunit.

In terms of biological role, this protein binds specifically to 23S rRNA; its binding is stimulated by other ribosomal proteins, e.g. L4, L17, and L20. It is important during the early stages of 50S assembly. It makes multiple contacts with different domains of the 23S rRNA in the assembled 50S subunit and ribosome. Functionally, the globular domain of the protein is located near the polypeptide exit tunnel on the outside of the subunit, while an extended beta-hairpin is found that lines the wall of the exit tunnel in the center of the 70S ribosome. The chain is Large ribosomal subunit protein uL22 from Campylobacter jejuni subsp. doylei (strain ATCC BAA-1458 / RM4099 / 269.97).